We begin with the raw amino-acid sequence, 242 residues long: Small ribosomal subunit protein uS2 (242 aa).

Belongs to the universal ribosomal protein uS2 family.

The chain is Small ribosomal subunit protein uS2 from Shewanella woodyi (strain ATCC 51908 / MS32).